We begin with the raw amino-acid sequence, 662 residues long: UvrABC system protein B (662 aa).

The Helicase ATP-binding domain occupies Asp-31–Arg-188. An ATP-binding site is contributed by Gly-44–Thr-51. Residues Tyr-97–Val-120 carry the Beta-hairpin motif. The Helicase C-terminal domain maps to Gln-435–Ile-601. In terms of domain architecture, UVR spans Lys-626 to Leu-661.

Belongs to the UvrB family. In terms of assembly, forms a heterotetramer with UvrA during the search for lesions. Interacts with UvrC in an incision complex.

The protein resides in the cytoplasm. Functionally, the UvrABC repair system catalyzes the recognition and processing of DNA lesions. A damage recognition complex composed of 2 UvrA and 2 UvrB subunits scans DNA for abnormalities. Upon binding of the UvrA(2)B(2) complex to a putative damaged site, the DNA wraps around one UvrB monomer. DNA wrap is dependent on ATP binding by UvrB and probably causes local melting of the DNA helix, facilitating insertion of UvrB beta-hairpin between the DNA strands. Then UvrB probes one DNA strand for the presence of a lesion. If a lesion is found the UvrA subunits dissociate and the UvrB-DNA preincision complex is formed. This complex is subsequently bound by UvrC and the second UvrB is released. If no lesion is found, the DNA wraps around the other UvrB subunit that will check the other stand for damage. The chain is UvrABC system protein B from Streptococcus pneumoniae serotype 19F (strain G54).